The primary structure comprises 603 residues: DNA mismatch repair protein MutL (603 aa).

It belongs to the DNA mismatch repair MutL/HexB family.

This protein is involved in the repair of mismatches in DNA. It is required for dam-dependent methyl-directed DNA mismatch repair. May act as a 'molecular matchmaker', a protein that promotes the formation of a stable complex between two or more DNA-binding proteins in an ATP-dependent manner without itself being part of a final effector complex. The polypeptide is DNA mismatch repair protein MutL (Listeria monocytogenes serotype 4a (strain HCC23)).